An 870-amino-acid polypeptide reads, in one-letter code: Dynamin-2 (870 aa).

A Dynamin-type G domain is found at 28 to 294; that stretch reads HLDLPQIAVV…LTNHIRESLP (267 aa). Residues 38–45 are G1 motif; that stretch reads GGQSAGKS. GDP is bound by residues Ser41, Gly43, Lys44, Ser45, Ser46, Arg59, and Gly60. Residues 64 to 66 form a G2 motif region; it reads VTR. Residues 136–139 are G3 motif; it reads DLPG. Residues 205–208 are G4 motif; that stretch reads TKLD. The GDP site is built by Lys206, Asp208, and Asp211. Tyr231 is modified (phosphotyrosine; by SRC). A G5 motif region spans residues 235-238; the sequence is VNRS. GDP is bound by residues Asn236, Arg237, and Gln239. Lys299 carries the N6-acetyllysine modification. Residues 519-625 form the PH domain; that stretch reads LVIRRGWLTI…WKASFLRAGV (107 aa). At Tyr597 the chain carries Phosphotyrosine; by SRC. Position 598 is an N6-acetyllysine (Lys598). The GED domain maps to 653–744; it reads VETIRNLVDS…IIGDISTSTV (92 aa). The segment at 741 to 870 is disordered; the sequence is TSTVSTPVPP…IRPAEPSLLD (130 aa). Thr755 is modified (phosphothreonine). The segment covering 756-767 has biased composition (polar residues); sequence WLQSASSHSPTP. Phosphoserine; by CDK1 is present on Ser764. Over residues 796–806 the composition is skewed to low complexity; sequence VPVGAAASFSA. Positions 826-855 are enriched in pro residues; it reads PAPPQIPSRPVRIPPGIPPGVPSRRPPAAP. Residue Ser848 is modified to Phosphoserine; by GSK3-alpha.

It belongs to the TRAFAC class dynamin-like GTPase superfamily. Dynamin/Fzo/YdjA family. In terms of assembly, oligomerizes into a helical polymer that self-assembles around the vesicle membrane, when associated to the menbrane through lipid binding. Interacts with SHANK1 and SHANK2. Interacts with SNX9. Interacts (via C-terminal proline-rich domain (PRD)) with SNX18 (via SH3 domain); this interaction regulates ATG9A and ATG16L1 trafficking from recycling endosomes to sites of autophagosome formation. Interacts with SNX33 (via SH3 domain). Interacts with MYO1E (via SH3 domain). Interacts with PSTPIP1 (via SH3 domain). Interacts with CTNND2. Interacts (via C-terminal proline-rich domain (PRD)) with BIN1 (via SH3 domain); this interaction allows the recruitment of DNM2 to the membrane tubules and inhibits self-assembly-stimulated GTPase activity on the membrane. Interacts with GABARAP, GABARAPL1 and GABARAPL2. Interacts with MAP1LC3B (the lipidate and non-lipidated LC3 form); this interaction mediates recycling endosome scission leading to autophagosome release. Interacts with ITSN1. Interacts (via C-terminal proline-rich domain (PRD)) with SH3BP4 (via SH3 domain); this interaction controls the GTPase activity and is prevented by EGFR-induced tyrosine phosphorylation of either DNM2 or SH3BP4. May interact with PIK3C3. May be a component of a complex composed of RAB5A (in GDP-bound form), DYN2 and PIK3C3. Interacts with SDC4; this interaction is markedly enhanced at focal ahesion site upon induction of focal adhesions and stress-fiber formation. Interacts with ACTN1. Interacts with CTTN; this interaction stimulates the intrinsic GTPase activity of DNM2 and stabilizes the association of DNM2 and actin filaments; in addition this interaction is stimulated by ligand binding to the receptor, leading to the recruitment of the DNM2-CTTN complex to the sequestered receptor-ligand complex to its internalization. Interacts with NOSTRIN (via SH3 domain); this interaction allows the recruitment of NOS3 to dynamin-positive structures. Interacts with TUBG1; this interaction may participate in centrosome cohesion. Phosphorylation at Ser-848 by GSK3-alpha relieves the inhibition of BIN1 and promotes endocytosis. Phosphorylation at Ser-764 by CDK1 is greatly increased upon mitotic entry. It regulates cytokinesis downstream of calcineurin, and does not affect clathrin-mediated endocytosis. Dephosphorylated by calcineurin/PP2 during cytokinesis in a Ca(2+)- and calmodulin-dependent manner. Phosphorylated on tyrosine residues by EGFR and after activation of SRC. As to expression, widely expressed. Expressed in skeletal muscle and the peripheral nerve.

Its subcellular location is the cytoplasm. It localises to the cytoskeleton. It is found in the cytoplasmic vesicle. The protein resides in the clathrin-coated vesicle. The protein localises to the cell projection. Its subcellular location is the uropodium. It localises to the endosome. It is found in the microtubule organizing center. The protein resides in the centrosome. The protein localises to the centriole. Its subcellular location is the recycling endosome. It localises to the phagocytic cup. It is found in the phagosome membrane. The protein resides in the podosome. The protein localises to the cell junction. Its subcellular location is the postsynaptic density. It localises to the synapse. It is found in the synaptosome. The protein resides in the midbody. The protein localises to the membrane. Its subcellular location is the clathrin-coated pit. The enzyme catalyses GTP + H2O = GDP + phosphate + H(+). In terms of biological role, catalyzes the hydrolysis of GTP and utilizes this energy to mediate vesicle scission at plasma membrane during endocytosis and filament remodeling at many actin structures during organization of the actin cytoskeleton. Plays an important role in vesicular trafficking processes, namely clathrin-mediated endocytosis (CME), exocytic and clathrin-coated vesicle from the trans-Golgi network, and PDGF stimulated macropinocytosis. During vesicular trafficking process, associates to the membrane, through lipid binding, and self-assembles into ring-like structure through oligomerization to form a helical polymer around the vesicle membrane and leading to vesicle scission. Plays a role in organization of the actin cytoskeleton by mediating arrangement of stress fibers and actin bundles in podocytes. During organization of the actin cytoskeleton, self-assembles into ring-like structure that directly bundles actin filaments to form typical membrane tubules decorated with dynamin spiral polymers. Self-assembly increases GTPase activity and the GTP hydrolysis causes the rapid depolymerization of dynamin spiral polymers, and results in dispersion of actin bundles. Remodels, through its interaction with CTTN, bundled actin filaments in a GTPase-dependent manner and plays a role in orchestrating the global actomyosin cytoskeleton. The interaction with CTTN stabilizes the interaction of DNM2 and actin filaments and stimulates the intrinsic GTPase activity that results in actin filament-barbed ends and increases the sensitivity of filaments in bundles to the actin depolymerizing factor, CFL1. Plays a role in the autophagy process, by participating in the formation of ATG9A vesicles destined for the autophagosomes through its interaction with SNX18, by mediating recycling endosome scission leading to autophagosome release through MAP1LC3B interaction. Also regulates maturation of apoptotic cell corpse-containing phagosomes by recruiting PIK3C3 to the phagosome membrane. Also plays a role in cytokinesis. May participate in centrosome cohesion through its interaction with TUBG1. Plays a role in the regulation of neuron morphology, axon growth and formation of neuronal growth cones. Involved in membrane tubulation. This Homo sapiens (Human) protein is Dynamin-2.